Here is a 118-residue protein sequence, read N- to C-terminus: DNA-binding protein M164_1799 (118 aa).

This sequence belongs to the PDCD5 family.

In Saccharolobus islandicus (strain M.16.4 / Kamchatka #3) (Sulfolobus islandicus), this protein is DNA-binding protein M164_1799.